A 75-amino-acid chain; its full sequence is UPF0352 protein VV1_3121 (75 aa).

Belongs to the UPF0352 family.

This Vibrio vulnificus (strain CMCP6) protein is UPF0352 protein VV1_3121.